A 533-amino-acid polypeptide reads, in one-letter code: Drimenyl diphosphate synthase (533 aa).

Positions 132, 133, 163, and 165 each coordinate (2E,6E)-farnesyl diphosphate. Residue E169 participates in Mg(2+) binding. PFTB repeat units lie at residues V274–A316, V324–P366, V372–G415, A425–P466, and L474–L517. The active-site Proton donor is the D303. Residue R501 participates in (2E,6E)-farnesyl diphosphate binding.

This sequence belongs to the terpene cyclase/mutase family. The cofactor is Mg(2+). It depends on Ni(2+) as a cofactor. Requires Co(2+) as cofactor.

It catalyses the reaction (2E,6E)-farnesyl diphosphate = (5S,9S,10S)-drim-7-en-11-yl diphosphate. In terms of biological role, catalyzes the cyclization of farnesyl diphosphate (FPP) to drimenyl diphosphate. Cannot use geranylgeranyl diphosphate (GGPP) as substrate. This is Drimenyl diphosphate synthase from Streptomyces showdoensis.